Here is an 868-residue protein sequence, read N- to C-terminus: DNA mismatch repair protein MutS (868 aa).

623–630 (GPNMAGKS) lines the ATP pocket.

The protein belongs to the DNA mismatch repair MutS family.

Functionally, this protein is involved in the repair of mismatches in DNA. It is possible that it carries out the mismatch recognition step. This protein has a weak ATPase activity. The chain is DNA mismatch repair protein MutS from Magnetococcus marinus (strain ATCC BAA-1437 / JCM 17883 / MC-1).